The sequence spans 2555 residues: Plipastatin synthase subunit C (2555 aa).

A condensation 1 region spans residues 7–306 (IQDIYPLSFM…NTIPIRAQSD (300 aa)). Residues 491–894 (TYAELDMYAS…SIEGVREAAV (404 aa)) form an adenylation 1 region. A Carrier 1 domain is found at 967-1042 (APRNVTEMKL…GLATVIREGT (76 aa)). Ser1002 bears the O-(pantetheine 4'-phosphoryl)serine mark. The tract at residues 1054–1344 (KQETYPVSSA…NTLALRTRPE (291 aa)) is condensation 2. Residues 1532–1927 (TYEDLNSWAN…QIDGVKEAAV (396 aa)) form an adenylation 2 region. Positions 2003-2077 (PPRNELEEQL…DLSPFIRKSE (75 aa)) constitute a Carrier 2 domain. The residue at position 2038 (Ser2038) is an O-(pantetheine 4'-phosphoryl)serine. Residues 2085–2548 (IQGDVPWTPV…SLTAEDLDSI (464 aa)) form an epimerization 3 region.

Belongs to the ATP-dependent AMP-binding enzyme family. It depends on pantetheine 4'-phosphate as a cofactor.

This protein is a multifunctional enzyme, able to activate and polymerize the amino acids Glu and Ala/Val as part of the biosynthesis of the lipopeptide antibiotic plipastatin. The Ala/Val residue is further epimerized to the D-isomer form. The activation sites for these amino acids consist of individual domains. This is Plipastatin synthase subunit C (ppsC) from Bacillus subtilis (strain 168).